Consider the following 261-residue polypeptide: SURF1-like protein (261 aa).

Transmembrane regions (helical) follow at residues 17 to 37 (LYWA…WQIF) and 223 to 243 (LSYI…WVFL).

The protein belongs to the SURF1 family.

It is found in the mitochondrion inner membrane. Functionally, probably involved in the biogenesis of the COX complex. This chain is SURF1-like protein, found in Monosiga brevicollis (Choanoflagellate).